An 820-amino-acid polypeptide reads, in one-letter code: Catenin beta (820 aa).

Residues Met1 to Gln16 are compositionally biased toward polar residues. The segment at Met1–Ala74 is disordered. Residues Ser52–Ser63 are compositionally biased toward low complexity. ARM repeat units follow at residues Asn157 to Lys196, Ala199 to His239, Arg241 to Leu280, Glu283 to Tyr322, His367 to Ser405, Asp406 to Cys445, Ser448 to Ser489, Glu495 to Leu535, Ser603 to Leu642, and Lys644 to Asp683. Residues Pro708–Thr811 are disordered. The span at Gly785–Pro796 shows a compositional bias: low complexity.

Belongs to the beta-catenin family.

The protein resides in the cytoplasm. The protein localises to the cytoskeleton. Binds to the cytoplasmic domain of the cell-cell adhesion molecule E-cadherin, and perhaps to other (membrane) proteins. The association of catenins to cadherins produces a complex which is linked to the actin filament network, and which seems to be of primary importance for cadherins cell-adhesion properties. This Tripneustes gratilla (Hawaian sea urchin) protein is Catenin beta.